The following is a 95-amino-acid chain: Small ribosomal subunit protein uS19 (95 aa).

It belongs to the universal ribosomal protein uS19 family.

Its function is as follows. Protein S19 forms a complex with S13 that binds strongly to the 16S ribosomal RNA. The polypeptide is Small ribosomal subunit protein uS19 (Lactobacillus gasseri (strain ATCC 33323 / DSM 20243 / BCRC 14619 / CIP 102991 / JCM 1131 / KCTC 3163 / NCIMB 11718 / NCTC 13722 / AM63)).